Consider the following 172-residue polypeptide: Cytidylate kinase (172 aa).

4-12 serves as a coordination point for ATP; the sequence is GPPGSGKST.

The protein belongs to the cytidylate kinase family. Type 2 subfamily.

The protein resides in the cytoplasm. The catalysed reaction is CMP + ATP = CDP + ADP. The enzyme catalyses dCMP + ATP = dCDP + ADP. This Aeropyrum pernix (strain ATCC 700893 / DSM 11879 / JCM 9820 / NBRC 100138 / K1) protein is Cytidylate kinase (cmk).